A 423-amino-acid chain; its full sequence is Glycine amidinotransferase, mitochondrial (423 aa).

The N-terminal 43 residues, 1–43 (MLRVRCLRGGSRGAEAVHYIGSRLGRTLTGWVQRTFQSTQAAT), are a transit peptide targeting the mitochondrion. Ser46 and Ser49 each carry phosphoserine. Residue Asp170 coordinates arginine. Active-site residues include Asp254 and His303. Asp305, Arg322, Ser354, and Ser355 together coordinate arginine. Position 385 is an N6-acetyllysine (Lys385). Cys407 (amidino-cysteine intermediate) is an active-site residue.

It belongs to the amidinotransferase family. Homodimer. There is an equilibrium between the monomeric and dimeric forms, shifted towards the side of the monomer. In terms of tissue distribution, expressed in brain, heart, kidney, liver, lung, salivary gland and skeletal muscle tissue, with the highest expression in kidney. Biallelically expressed in placenta and fetal tissues.

It is found in the mitochondrion inner membrane. It localises to the cytoplasm. It catalyses the reaction L-arginine + glycine = guanidinoacetate + L-ornithine. The catalysed reaction is 4-aminobutanoate + L-arginine = 4-guanidinobutanoate + L-ornithine. The enzyme catalyses beta-alanine + L-arginine = 3-guanidinopropanoate + L-ornithine. It carries out the reaction taurine + L-arginine = taurocyamine + L-ornithine. It functions in the pathway amine and polyamine biosynthesis; creatine biosynthesis; creatine from L-arginine and glycine: step 1/2. Functionally, transamidinase that catalyzes the transfer of the amidino group of L-arginine onto the amino moiety of acceptor metabolites such as glycine, beta-alanine, gamma-aminobutyric acid (GABA) and taurine yielding the corresponding guanidine derivatives. Catalyzes the rate-limiting step of creatine biosynthesis, namely the transfer of the amidino group from L-arginine to glycine to generate guanidinoacetate, which is then methylated by GAMT to form creatine. Provides creatine as a source for ATP generation in tissues with high energy demands, in particular skeletal muscle, heart and brain. The sequence is that of Glycine amidinotransferase, mitochondrial (GATM) from Homo sapiens (Human).